The chain runs to 179 residues: UPF0200 protein TV0279 (179 aa).

ATP is bound at residue 6-13; it reads GMPGAGKD.

Belongs to the UPF0200 family.

This chain is UPF0200 protein TV0279, found in Thermoplasma volcanium (strain ATCC 51530 / DSM 4299 / JCM 9571 / NBRC 15438 / GSS1).